We begin with the raw amino-acid sequence, 87 residues long: Small ribosomal subunit protein bS20 (87 aa).

Positions 1–26 are disordered; that stretch reads MANIKSAKKRAVQSEKARKHNASRRS.

This sequence belongs to the bacterial ribosomal protein bS20 family.

Its function is as follows. Binds directly to 16S ribosomal RNA. The chain is Small ribosomal subunit protein bS20 from Salmonella gallinarum (strain 287/91 / NCTC 13346).